The primary structure comprises 123 residues: Large ribosomal subunit protein uL14 (123 aa).

The protein belongs to the universal ribosomal protein uL14 family. Part of the 50S ribosomal subunit. Forms a cluster with proteins L3 and L19. In the 70S ribosome, L14 and L19 interact and together make contacts with the 16S rRNA in bridges B5 and B8.

Functionally, binds to 23S rRNA. Forms part of two intersubunit bridges in the 70S ribosome. The chain is Large ribosomal subunit protein uL14 from Sodalis glossinidius (strain morsitans).